We begin with the raw amino-acid sequence, 61 residues long: Large ribosomal subunit protein uL30 (61 aa).

Belongs to the universal ribosomal protein uL30 family. Part of the 50S ribosomal subunit.

This Caulobacter vibrioides (strain ATCC 19089 / CIP 103742 / CB 15) (Caulobacter crescentus) protein is Large ribosomal subunit protein uL30.